Here is a 37-residue protein sequence, read N- to C-terminus: Large ribosomal subunit protein bL36 (37 aa).

The protein belongs to the bacterial ribosomal protein bL36 family.

The chain is Large ribosomal subunit protein bL36 from Clostridioides difficile (strain 630) (Peptoclostridium difficile).